The primary structure comprises 773 residues: DNA gyrase subunit B (773 aa).

Positions 416–530 (SEIFLVEGDS…QGHVFIAQAP (115 aa)) constitute a Toprim domain. Mg(2+) contacts are provided by E422, D495, and D497.

Belongs to the type II topoisomerase GyrB family. As to quaternary structure, heterotetramer, composed of two GyrA and two GyrB chains. In the heterotetramer, GyrA contains the active site tyrosine that forms a transient covalent intermediate with DNA, while GyrB binds cofactors and catalyzes ATP hydrolysis. The cofactor is Mg(2+). Mn(2+) serves as cofactor. Requires Ca(2+) as cofactor.

The protein resides in the cytoplasm. The enzyme catalyses ATP-dependent breakage, passage and rejoining of double-stranded DNA.. Its function is as follows. A type II topoisomerase that negatively supercoils closed circular double-stranded (ds) DNA in an ATP-dependent manner to modulate DNA topology and maintain chromosomes in an underwound state. Negative supercoiling favors strand separation, and DNA replication, transcription, recombination and repair, all of which involve strand separation. Also able to catalyze the interconversion of other topological isomers of dsDNA rings, including catenanes and knotted rings. Type II topoisomerases break and join 2 DNA strands simultaneously in an ATP-dependent manner. The sequence is that of DNA gyrase subunit B from Helicobacter pylori (strain J99 / ATCC 700824) (Campylobacter pylori J99).